The chain runs to 838 residues: Calmodulin-binding transcription activator 6 (838 aa).

Positions 25-134 form a DNA-binding region, CG-1; the sequence is VQTMLEEAKS…YRDTQEAATT (110 aa). The stretch at 525–554 is one ANK repeat; the sequence is QGWTALHWAAYYGREKMVAALLSAGARPNL. 3 consecutive IQ domains span residues 671–700, 713–742, and 788–817; these read SIIA…IQCR, MRRQ…SVGV, and LERS…THEE. Positions 738–760 are calmodulin-binding; sequence WSVGVLEKAVLRWRQKRKGFRGL. A coiled-coil region spans residues 802–822; sequence KKAQQDYRRMKLTHEEAQVNH.

Belongs to the CAMTA family. In terms of tissue distribution, expressed in roots, stems, leaves, sepals, petals, stamen filaments, top of carpels, anthers and siliques, but not in stigmas.

Its subcellular location is the nucleus. Transcription activator that binds calmodulin in a calcium-dependent manner in vitro. Binds to the DNA consensus sequence 5'-[ACG]CGCG[GTC]-3'. Regulates transcriptional activity in response to calcium signals. The chain is Calmodulin-binding transcription activator 6 from Arabidopsis thaliana (Mouse-ear cress).